A 330-amino-acid chain; its full sequence is PDZ and LIM domain protein 4 (330 aa).

Positions 1–84 (MTHSVTLRGP…HLTLSVSRPE (84 aa)) constitute a PDZ domain. 2 disordered regions span residues 104 to 153 (DPES…SNEA) and 219 to 242 (EAGE…ASKL). 7 positions are modified to phosphoserine: serine 107, serine 111, serine 115, serine 118, serine 119, serine 124, and serine 134. Over residues 108-122 (QDCSPATSRRSSVSG) the composition is skewed to polar residues. The LIM zinc-binding domain occupies 255–305 (CTRCGHGIVGTIVKARDKLYHPECFMCSDCGLNLKQRGYFFLDERLYCENH).

In terms of assembly, homodimer. Interacts (via C-terminus only or via combined C-terminus and LIM domain, but not LIM domain only) with PTPN13 (via the second or fourth PDZ domains). Found in a complex with PTPN13 and TRIP6. Interacts (via PDZ domain) with ACTN1 and ACTN2 (via C-terminal SDL residues). Interacts (via PDZ domain) with TRIP6 (via the second LIM domain or via the third LIM domain plus C-terminus). Interacts (via LIM domain) with GRIA1 (via C-terminus); this interaction as well as the interaction with alpha-actinin is required for their colocalization in early endosomes. Interacts with PDLIM1. Forms (via LIM domain) a heterodimer with PDLIM3. Interacts directly with SRC (via kinase domain and to a lesser extent the SH2 domain). Post-translationally, phosphorylated on tyrosine residue(s). Can be dephosphorylated by PTPN13. In terms of tissue distribution, expressed in several non-muscle tissues including lung, brain, ovary and uterus, and especially in epithelial cells at 14 dpc. In the uterus, high expression in the glandular epithelium, but absent in the simple columnar epithelium lining the uterus cavity.

The protein localises to the cytoplasm. It localises to the cytoskeleton. Its subcellular location is the cell projection. It is found in the dendritic spine. The protein resides in the early endosome membrane. The protein localises to the recycling endosome membrane. It localises to the nucleus. Its subcellular location is the perinuclear region. It is found in the lamellipodium. The protein resides in the synapse. The protein localises to the synaptosome. Suppresses SRC activation by recognizing and binding to active SRC and facilitating PTPN13-mediated dephosphorylation of SRC 'Tyr-419' leading to its inactivation. Inactivated SRC dissociates from this protein allowing the initiation of a new SRC inactivation cycle. Involved in reorganization of the actin cytoskeleton. In nonmuscle cells, binds to ACTN1 (alpha-actinin-1), increases the affinity of ACTN1 to F-actin (filamentous actin), and promotes formation of actin stress fibers. Involved in regulation of the synaptic AMPA receptor transport in dendritic spines of hippocampal pyramidal neurons directing the receptors toward an insertion at the postsynaptic membrane. Links endosomal surface-internalized GRIA1-containing AMPA receptors to the alpha-actinin/actin cytoskeleton. Increases AMPA receptor-mediated excitatory postsynaptic currents in neurons. This Mus musculus (Mouse) protein is PDZ and LIM domain protein 4 (Pdlim4).